An 847-amino-acid chain; its full sequence is A-kinase anchor protein 4 (847 aa).

Positions 1–187 (MIAYCGTTKM…MAASKNTNNN (187 aa)) are excised as a propeptide. 4 positions are modified to phosphoserine: serine 95, serine 129, serine 189, and serine 203. Polar residues predominate over residues 182 to 204 (KNTNNNQSPSNPATKSPSNQRSV). A disordered region spans residues 182–209 (KNTNNNQSPSNPATKSPSNQRSVATPDG). Threonine 206 carries the post-translational modification Phosphothreonine. Phosphoserine is present on residues serine 212, serine 225, and serine 270. Residues 218–231 (YYVNRLSSLVIQMA) are interaction with Prkar1a and Prkar2a. Phosphotyrosine is present on tyrosine 300. A phosphoserine mark is found at serine 301, serine 304, serine 340, serine 430, serine 441, serine 443, serine 462, serine 491, serine 496, and serine 503. Residues 334–343 (YANQVASDMM) form a PKA-RI subunit binding domain region. Threonine 505 carries the phosphothreonine modification. The segment at 511–536 (KQGTQGRVPNKVCPSKDEKREKISPS) is disordered. Positions 524–533 (PSKDEKREKI) are enriched in basic and acidic residues. Residues serine 536 and serine 581 each carry the phosphoserine modification. Positions 583 to 613 (QYEKSGGGQSSKSLSMKHFESRGAPGPSTCA) are disordered. A phosphoserine mark is found at serine 626, serine 631, serine 648, serine 650, serine 674, serine 677, serine 700, and serine 729. The tract at residues 655 to 677 (CCDSRSKQAAPVAKRPEDQSQDS) is disordered.

This sequence belongs to the AKAP110 family. As to quaternary structure, interacts with PRKAR1A and PRKAR2A. Interacts with ENO4. Interacts with QRICH2. Phosphorylated by STK33 during sperm flagella assembly. In terms of tissue distribution, expressed in flagella of epididymal sperm.

It is found in the cell projection. It localises to the cilium. The protein localises to the flagellum. Its function is as follows. Major structural component of sperm fibrous sheath. May play a role in sperm motility. This Rattus norvegicus (Rat) protein is A-kinase anchor protein 4.